The primary structure comprises 336 residues: P2Y purinoceptor 13 (336 aa).

Topologically, residues 1 to 32 (MLGTVNTTGMQGFNKSERCPRDTRMTQLLFPV) are extracellular. Residues Asn-6 and Asn-14 are each glycosylated (N-linked (GlcNAc...) asparagine). The helical transmembrane segment at 33 to 53 (LYTVVFFTGVLLNTLALWVFI) threads the bilayer. Residues 54–60 (HIPSNST) lie on the Cytoplasmic side of the membrane. The chain crosses the membrane as a helical span at residues 61-81 (FIIYLKNTLVADLIMTLMLPF). The Extracellular portion of the chain corresponds to 82–100 (KILSDSRLAPWQLRGFVCT). Residues Cys-99 and Cys-176 are joined by a disulfide bond. A helical membrane pass occupies residues 101-121 (FSSVVFYETMYVGIMMLGLIA). At 122 to 144 (FDRFLKIVVPFRKTFVKKTAFAK) the chain is on the cytoplasmic side. The helical transmembrane segment at 145–165 (IVSISIWLLMFLISLPNMILN) threads the bilayer. Topologically, residues 166–193 (KEATASTVKKCASLKSPLGLLWHQVVSH) are extracellular. The helical transmembrane segment at 194 to 214 (TCQFIFWTVFILMLLFYTVIA) threads the bilayer. Residues 215 to 237 (KKVYDSYRKFKSRDSKHKRLEAK) are Cytoplasmic-facing. The helical transmembrane segment at 238–258 (VFIVMAVFFVCFAPFHFVRVP) threads the bilayer. Residues 259 to 281 (YTHSQTTNKTDCRLENQLFLAKE) are Extracellular-facing. N-linked (GlcNAc...) asparagine glycosylation is present at Asn-266. A helical membrane pass occupies residues 282 to 302 (STLFLATTNICMDPLIYIILC). The Cytoplasmic segment spans residues 303-336 (KKFTRKVPCMRWRTKTAASSDEHHSSQTDNITLS).

It belongs to the G-protein coupled receptor 1 family. As to expression, highest levels in spleen, liver brain and kidney. Lower but significant level are also detected in intestine, stomach, skeletal muscle, testis, heart and lung.

It is found in the cell membrane. Receptor for ADP. Coupled to G(i)-proteins. May play a role in hematopoiesis and the immune system. This is P2Y purinoceptor 13 (P2ry13) from Rattus norvegicus (Rat).